Reading from the N-terminus, the 358-residue chain is Alanine racemase (358 aa).

Catalysis depends on K35, which acts as the Proton acceptor; specific for D-alanine. K35 carries the N6-(pyridoxal phosphate)lysine modification. R130 contacts substrate. Catalysis depends on Y255, which acts as the Proton acceptor; specific for L-alanine. Substrate is bound at residue M303.

It belongs to the alanine racemase family. It depends on pyridoxal 5'-phosphate as a cofactor.

The catalysed reaction is L-alanine = D-alanine. It functions in the pathway amino-acid biosynthesis; D-alanine biosynthesis; D-alanine from L-alanine: step 1/1. Its function is as follows. Catalyzes the interconversion of L-alanine and D-alanine. May also act on other amino acids. The sequence is that of Alanine racemase (alr) from Shewanella piezotolerans (strain WP3 / JCM 13877).